Here is a 339-residue protein sequence, read N- to C-terminus: Anthranilate phosphoribosyltransferase (339 aa).

5-phospho-alpha-D-ribose 1-diphosphate contacts are provided by residues Gly-82, 85-86 (GD), Thr-90, 92-95 (NIST), 110-118 (KHGNRSASG), and Ser-122. Residue Gly-82 coordinates anthranilate. Mg(2+) is bound at residue Ser-94. Anthranilate is bound at residue Asn-113. Arg-168 contributes to the anthranilate binding site. Positions 226 and 227 each coordinate Mg(2+).

It belongs to the anthranilate phosphoribosyltransferase family. Homodimer. It depends on Mg(2+) as a cofactor.

It carries out the reaction N-(5-phospho-beta-D-ribosyl)anthranilate + diphosphate = 5-phospho-alpha-D-ribose 1-diphosphate + anthranilate. The protein operates within amino-acid biosynthesis; L-tryptophan biosynthesis; L-tryptophan from chorismate: step 2/5. Functionally, catalyzes the transfer of the phosphoribosyl group of 5-phosphorylribose-1-pyrophosphate (PRPP) to anthranilate to yield N-(5'-phosphoribosyl)-anthranilate (PRA). This chain is Anthranilate phosphoribosyltransferase, found in Methanosphaerula palustris (strain ATCC BAA-1556 / DSM 19958 / E1-9c).